The chain runs to 811 residues: Metal transporter cnnm-1 (811 aa).

Residues 1–24 (MSASCLRLLTLSLFILGQCNVTAA) form the signal peptide. Residues N20, N49, N61, and N122 are each glycosylated (N-linked (GlcNAc...) asparagine). Residues 25–204 (QNGVDDEVTT…KEYFLPLPLQ (180 aa)) lie on the Extracellular side of the membrane. The CNNM transmembrane domain maps to 197-376 (YFLPLPLQIA…TDNGQVSNEL (180 aa)). A helical membrane pass occupies residues 205 to 225 (IACIGFLLCLSALFSGLTLGL). Residues 226–259 (MSLTPQELELVIKSGAIKEQKCAAKILPVRKKGN) lie on the Cytoplasmic side of the membrane. The chain crosses the membrane as a helical span at residues 260 to 280 (LLLCSLLLGNVIVNSAISILM). Residues 281 to 284 (GELT) lie on the Extracellular side of the membrane. The helical transmembrane segment at 285–305 (TGIYALIGSTMGIVIFGEILP) threads the bilayer. At 306–315 (QSICVKKGLE) the chain is on the cytoplasmic side. A helical transmembrane segment spans residues 316–336 (VGAHTISITQLFIFLTFPIAW). The Extracellular segment spans residues 337-811 (PVSKLLDCLL…EEEMALLDQP (475 aa)). CBS domains are found at residues 394–456 (MTKI…NFTV) and 462–530 (YHKH…INDE). Residues N435 and N453 are each glycosylated (N-linked (GlcNAc...) asparagine). Residues 741–760 (DVSHNSSAHNSNLSLVEKPG) form a disordered region. Residues 743-755 (SHNSSAHNSNLSL) are compositionally biased toward low complexity. N-linked (GlcNAc...) asparagine glycans are attached at residues N745 and N752.

Belongs to the ACDP family. As to expression, highly expressed in the intestine and in neurons, but it is also expressed in a variety of tissues including the pharynx, hypodermis, rectum and in muscles.

The protein localises to the basolateral cell membrane. Its function is as follows. Probable metal transporter. Probably acts redundantly with the other metal transport proteins cnnm-2, cnnm-3, cnnm-4 and cnnm-5 to regulate Mg(2+) homeostasis. Promotes postembryonic gonad development by regulating Mg(2+) levels, probably via AMPK signaling. The protein is Metal transporter cnnm-1 of Caenorhabditis elegans.